Here is a 78-residue protein sequence, read N- to C-terminus: Defensin-like protein 287 (78 aa).

Positions 1 to 24 are cleaved as a signal peptide; the sequence is MNNLRVIMSVLLAVLVFTATVSES. Disulfide bonds link cysteine 39–cysteine 59, cysteine 45–cysteine 64, and cysteine 51–cysteine 66.

It belongs to the DEFL family.

Its subcellular location is the secreted. This chain is Defensin-like protein 287, found in Arabidopsis thaliana (Mouse-ear cress).